Here is a 152-residue protein sequence, read N- to C-terminus: Protein-export protein SecB (152 aa).

Belongs to the SecB family. Homotetramer, a dimer of dimers. One homotetramer interacts with 1 SecA dimer.

The protein localises to the cytoplasm. Its function is as follows. One of the proteins required for the normal export of preproteins out of the cell cytoplasm. It is a molecular chaperone that binds to a subset of precursor proteins, maintaining them in a translocation-competent state. It also specifically binds to its receptor SecA. This is Protein-export protein SecB from Rickettsia typhi (strain ATCC VR-144 / Wilmington).